Here is a 182-residue protein sequence, read N- to C-terminus: uncharacterized protein (182 aa).

Positions 1 to 177 (MEFSVGGVEV…KFLEVFKKHL (177 aa)) constitute a Macro domain.

This is an uncharacterized protein from Pyrobaculum aerophilum (strain ATCC 51768 / DSM 7523 / JCM 9630 / CIP 104966 / NBRC 100827 / IM2).